The primary structure comprises 207 residues: MANYDVLKVDGSKAGSVELSDSVFAIEPNKDVIFEAINLQRASLRQGTHSVKNRSAVRGGGRKPWRQKGTGRARQGTIRAPQWRGGGIVFGPTPRSYSYKMPKKMRRLALRSALSFKVQENGFTVVDAFGLEAPKTKEFTKVLSNLELPKKVLVVTESEDVNVELSARNIPGVQITTVTGLNVLDITSADSVLITEAAAKKVEEVLG.

The segment at 48–75 is disordered; sequence THSVKNRSAVRGGGRKPWRQKGTGRARQ. Over residues 60–71 the composition is skewed to basic residues; the sequence is GGRKPWRQKGTG.

The protein belongs to the universal ribosomal protein uL4 family. In terms of assembly, part of the 50S ribosomal subunit.

Its function is as follows. One of the primary rRNA binding proteins, this protein initially binds near the 5'-end of the 23S rRNA. It is important during the early stages of 50S assembly. It makes multiple contacts with different domains of the 23S rRNA in the assembled 50S subunit and ribosome. Forms part of the polypeptide exit tunnel. The protein is Large ribosomal subunit protein uL4 of Staphylococcus carnosus (strain TM300).